We begin with the raw amino-acid sequence, 176 residues long: Glutathione-regulated potassium-efflux system ancillary protein KefF (176 aa).

FMN-binding positions include H8, 14–17, 65–68, and 105–108; these read SHAN, MQWY, and TTGG.

It belongs to the NAD(P)H dehydrogenase (quinone) family. KefF subfamily. As to quaternary structure, homodimer. Interacts with KefC. It depends on FMN as a cofactor.

The protein localises to the cell inner membrane. It catalyses the reaction a quinone + NADH + H(+) = a quinol + NAD(+). The catalysed reaction is a quinone + NADPH + H(+) = a quinol + NADP(+). Regulatory subunit of a potassium efflux system that confers protection against electrophiles. Required for full activity of KefC. Shows redox enzymatic activity, but this enzymatic activity is not required for activation of KefC. In Salmonella dublin (strain CT_02021853), this protein is Glutathione-regulated potassium-efflux system ancillary protein KefF.